The sequence spans 363 residues: MAIQTDSFAAAPAPSSGSTRRLISAAPTSPNEEAMERALRPKLLQEYVGQAKAREQLEIFIGAARKRSEALDHVLLFGPPGLGKTTLSHIIAAELGVNLRQTSGPVLEKPKDLAAILTNLEANDVLFIDEIHRLSPVVEEILYPALEDYQIDIMIGEGPAARSIKLDLQPFTLVGATTRAGMLTNPLRDRFGIVARLEFYTPEELVRIVTRSAGLLNVPIDAEGALELACRSRGTPRIANRLLRRVRDYAEVKSDGRIVKRIAELALTMLDVDPRGFDVMDRKLLEAVIHRFDGGPVGLDNVAAAIGEDAGTIEDVIEPYLIQQGFLQRTPRGRIATLAAYRHLGVTPPRGGAGPVGSDLFEG.

The interval 1-32 (MAIQTDSFAAAPAPSSGSTRRLISAAPTSPNE) is disordered. The segment covering 7–18 (SFAAAPAPSSGS) has biased composition (low complexity). Residues 13–200 (APSSGSTRRL…FGIVARLEFY (188 aa)) form a large ATPase domain (RuvB-L) region. ATP contacts are provided by residues Leu39, Arg40, Gly81, Lys84, Thr85, Thr86, 147-149 (EDY), Arg190, Tyr200, and Arg237. Thr85 is a Mg(2+) binding site. Residues 201–271 (TPEELVRIVT…IAELALTMLD (71 aa)) are small ATPAse domain (RuvB-S). The tract at residues 274 to 363 (PRGFDVMDRK…GPVGSDLFEG (90 aa)) is head domain (RuvB-H). DNA contacts are provided by Arg329 and Arg334.

The protein belongs to the RuvB family. In terms of assembly, homohexamer. Forms an RuvA(8)-RuvB(12)-Holliday junction (HJ) complex. HJ DNA is sandwiched between 2 RuvA tetramers; dsDNA enters through RuvA and exits via RuvB. An RuvB hexamer assembles on each DNA strand where it exits the tetramer. Each RuvB hexamer is contacted by two RuvA subunits (via domain III) on 2 adjacent RuvB subunits; this complex drives branch migration. In the full resolvosome a probable DNA-RuvA(4)-RuvB(12)-RuvC(2) complex forms which resolves the HJ.

Its subcellular location is the cytoplasm. The catalysed reaction is ATP + H2O = ADP + phosphate + H(+). The RuvA-RuvB-RuvC complex processes Holliday junction (HJ) DNA during genetic recombination and DNA repair, while the RuvA-RuvB complex plays an important role in the rescue of blocked DNA replication forks via replication fork reversal (RFR). RuvA specifically binds to HJ cruciform DNA, conferring on it an open structure. The RuvB hexamer acts as an ATP-dependent pump, pulling dsDNA into and through the RuvAB complex. RuvB forms 2 homohexamers on either side of HJ DNA bound by 1 or 2 RuvA tetramers; 4 subunits per hexamer contact DNA at a time. Coordinated motions by a converter formed by DNA-disengaged RuvB subunits stimulates ATP hydrolysis and nucleotide exchange. Immobilization of the converter enables RuvB to convert the ATP-contained energy into a lever motion, pulling 2 nucleotides of DNA out of the RuvA tetramer per ATP hydrolyzed, thus driving DNA branch migration. The RuvB motors rotate together with the DNA substrate, which together with the progressing nucleotide cycle form the mechanistic basis for DNA recombination by continuous HJ branch migration. Branch migration allows RuvC to scan DNA until it finds its consensus sequence, where it cleaves and resolves cruciform DNA. In Leptothrix cholodnii (strain ATCC 51168 / LMG 8142 / SP-6) (Leptothrix discophora (strain SP-6)), this protein is Holliday junction branch migration complex subunit RuvB.